Consider the following 320-residue polypeptide: Cytochrome f (320 aa).

Residues 1-35 (MQNRNTFSWVKEQMTRFISVSIMIYVITRTSISNA) form the signal peptide. Residues Y36, C56, C59, and H60 each coordinate heme. A helical transmembrane segment spans residues 286–306 (VQGLLFFLASVILAQIFLVLK).

The protein belongs to the cytochrome f family. As to quaternary structure, the 4 large subunits of the cytochrome b6-f complex are cytochrome b6, subunit IV (17 kDa polypeptide, petD), cytochrome f and the Rieske protein, while the 4 small subunits are PetG, PetL, PetM and PetN. The complex functions as a dimer. Heme is required as a cofactor.

Its subcellular location is the plastid. The protein localises to the chloroplast thylakoid membrane. Its function is as follows. Component of the cytochrome b6-f complex, which mediates electron transfer between photosystem II (PSII) and photosystem I (PSI), cyclic electron flow around PSI, and state transitions. The polypeptide is Cytochrome f (Liriodendron tulipifera (Tuliptree)).